Reading from the N-terminus, the 298-residue chain is Phospholipase A1 (298 aa).

Cysteine 4 and cysteine 87 are disulfide-bonded. N-linked (GlcNAc...) asparagine glycosylation is found at asparagine 88 and asparagine 122. Serine 134 (nucleophile) is an active-site residue. Catalysis depends on aspartate 162, which acts as the Charge relay system. Cystine bridges form between cysteine 173-cysteine 178 and cysteine 216-cysteine 225. Residue histidine 227 is the Charge relay system of the active site. 3 disulfide bridges follow: cysteine 242–cysteine 266, cysteine 243–cysteine 291, and cysteine 259–cysteine 264.

The protein belongs to the AB hydrolase superfamily. Lipase family. In terms of tissue distribution, expressed by the venom gland.

It is found in the secreted. It catalyses the reaction a 1,2-diacyl-sn-glycero-3-phosphocholine + H2O = a 2-acyl-sn-glycero-3-phosphocholine + a fatty acid + H(+). Catalyzes the hydrolysis of phosphatidylcholine with phospholipase A1 activity. May act as an allergen and induce hemolytic activity. The polypeptide is Phospholipase A1 (Vespula squamosa (Southern yellow jacket)).